The primary structure comprises 378 residues: Leukosialin (378 aa).

A signal peptide spans W1–Q7. At E8 to G231 the chain is on the extracellular side. O-linked (GalNAc...) threonine glycosylation is found at T13, T15, and T20. The disordered stretch occupies residues T13–S33. O-linked (GalNAc...) serine glycosylation is found at S23, S25, and S27. T28 carries O-linked (GalNAc...) threonine glycosylation. Residues S29 and S33 are each glycosylated (O-linked (GalNAc...) serine). An O-linked (GalNAc...) threonine glycan is attached at T34. Residues S36 and S37 are each glycosylated (O-linked (GalNAc...) serine). O-linked (GalNAc...) threonine glycosylation occurs at T40. 2 O-linked (GalNAc...) serine glycosylation sites follow: S108 and S113. T118, T120, and T124 each carry an O-linked (GalNAc...) threonine glycan. Residues S125 and S126 are each glycosylated (O-linked (GalNAc...) serine). The O-linked (GalNAc...) threonine glycan is linked to T174. O-linked (GalNAc...) serine glycosylation is found at S176 and S180. T183 carries an O-linked (GalNAc...) threonine glycan. S187 is a glycosylation site (O-linked (GalNAc...) serine). Residue T189 is glycosylated (O-linked (GalNAc...) threonine). A helical membrane pass occupies residues M232–W254. The segment at R255–R285 is required for interaction with EZR, MSN and RDX and for co-localization to microvilli. Residues R255 to L378 are Cytoplasmic-facing. A Nuclear localization signal motif is present at residues K259–R273. The disordered stretch occupies residues L265–L378. At S268 the chain carries Phosphoserine. Position 276 is a phosphothreonine (T276). Residues G310–F321 show a composition bias toward polar residues. Position 311 is a phosphoserine (S311). T316 is modified (phosphothreonine). Phosphoserine is present on residues S322 and S326. S330 is subject to Phosphoserine; by PKC/PRKCQ. S354 bears the Phosphoserine mark. Position 361 is a phosphothreonine (T361).

As to quaternary structure, interacts with SIGLEC1. In terms of assembly, monomer. Interacts with CTNNB1. Interacts with EZR, MSN and RDX (via FERM domain). Post-translationally, has a high content of sialic acid and O-linked carbohydrate structures. In terms of processing, phosphorylation at Ser-330 is regulated by chemokines, requires its association with ERM proteins (EZR, RDX and MSN) and is essential for its function in the regulation of T-cell trafficking to lymph nodes. Cleavage by CTSG releases its extracellular domain and triggers its intramembrane proteolysis by gamma-secretase releasing the CD43 cytoplasmic tail chain (CD43-ct) which translocates to the nucleus. Post-translationally, sumoylated. In terms of tissue distribution, cell surface of thymocytes, T-lymphocytes, neutrophils, plasma cells and myelomas.

It is found in the membrane. It localises to the cell projection. The protein localises to the microvillus. Its subcellular location is the uropodium. The protein resides in the nucleus. It is found in the PML body. Predominant cell surface sialoprotein of leukocytes which regulates multiple T-cell functions, including T-cell activation, proliferation, differentiation, trafficking and migration. Positively regulates T-cell trafficking to lymph-nodes via its association with ERM proteins (EZR, RDX and MSN). Negatively regulates Th2 cell differentiation and predisposes the differentiation of T-cells towards a Th1 lineage commitment. Promotes the expression of IFN-gamma by T-cells during T-cell receptor (TCR) activation of naive cells and induces the expression of IFN-gamma by CD4(+) T-cells and to a lesser extent by CD8(+) T-cells. Plays a role in preparing T-cells for cytokine sensing and differentiation into effector cells by inducing the expression of cytokine receptors IFNGR and IL4R, promoting IFNGR and IL4R signaling and by mediating the clustering of IFNGR with TCR. Acts as a major E-selectin ligand responsible for Th17 cell rolling on activated vasculature and recruitment during inflammation. Mediates Th17 cells, but not Th1 cells, adhesion to E-selectin. Acts as a T-cell counter-receptor for SIGLEC1. Its function is as follows. Protects cells from apoptotic signals, promoting cell survival. The polypeptide is Leukosialin (Spn) (Rattus norvegicus (Rat)).